The chain runs to 442 residues: 3-phosphoshikimate 1-carboxyvinyltransferase (442 aa).

3-phosphoshikimate is bound by residues Lys-25, Ser-26, and Arg-30. A phosphoenolpyruvate-binding site is contributed by Lys-25. Phosphoenolpyruvate-binding residues include Gly-97 and Arg-125. 3-phosphoshikimate contacts are provided by Ser-170, Ser-171, Gln-172, Asp-323, and Lys-350. Gln-172 contacts phosphoenolpyruvate. Catalysis depends on Asp-323, which acts as the Proton acceptor. 2 residues coordinate phosphoenolpyruvate: Arg-354 and Arg-399.

It belongs to the EPSP synthase family. Monomer.

The protein resides in the cytoplasm. It carries out the reaction 3-phosphoshikimate + phosphoenolpyruvate = 5-O-(1-carboxyvinyl)-3-phosphoshikimate + phosphate. It participates in metabolic intermediate biosynthesis; chorismate biosynthesis; chorismate from D-erythrose 4-phosphate and phosphoenolpyruvate: step 6/7. Functionally, catalyzes the transfer of the enolpyruvyl moiety of phosphoenolpyruvate (PEP) to the 5-hydroxyl of shikimate-3-phosphate (S3P) to produce enolpyruvyl shikimate-3-phosphate and inorganic phosphate. This is 3-phosphoshikimate 1-carboxyvinyltransferase from Bartonella tribocorum (strain CIP 105476 / IBS 506).